Consider the following 692-residue polypeptide: Phenoloxidase subunit 2 (692 aa).

The propeptide occupies 1-97; it reads MTDRVKSLQL…PRHQEMATEV (97 aa). Cu cation-binding residues include His213, His217, and His243. N-linked (GlcNAc...) asparagine glycans are attached at residues Asn256, Asn295, and Asn309. Glu351 acts as the Proton acceptor in catalysis. The Cu cation site is built by His366, His370, and His406. A glycan (N-linked (GlcNAc...) asparagine) is linked at Asn494. Intrachain disulfides connect Cys583–Cys628 and Cys585–Cys635.

Belongs to the tyrosinase family. As to quaternary structure, heterodimer. It depends on Cu(2+) as a cofactor.

Its subcellular location is the secreted. It catalyses the reaction L-tyrosine + O2 = L-dopaquinone + H2O. The enzyme catalyses 2 L-dopa + O2 = 2 L-dopaquinone + 2 H2O. In terms of biological role, copper-containing oxidase that functions in the formation of pigments such as melanins and other polyphenolic compounds. Catalyzes the rate-limiting conversions of tyrosine to DOPA, DOPA to DOPA-quinone and possibly 5,6 dihydroxyindole to indole-5'6 quinone. Binds to the surface of hemocytes and is involved in hemocyte melanization. Binds the A.niger cell wall component alpha-1,3-glucan, a fungal pathogen-associated molecular pattern (PAMP) that activates the host immune response. This is Phenoloxidase subunit 2 from Galleria mellonella (Greater wax moth).